The chain runs to 300 residues: 4-diphosphocytidyl-2-C-methyl-D-erythritol kinase (300 aa).

K12 is a catalytic residue. Residue P94–S104 participates in ATP binding. The active site involves D136.

It belongs to the GHMP kinase family. IspE subfamily.

The catalysed reaction is 4-CDP-2-C-methyl-D-erythritol + ATP = 4-CDP-2-C-methyl-D-erythritol 2-phosphate + ADP + H(+). The protein operates within isoprenoid biosynthesis; isopentenyl diphosphate biosynthesis via DXP pathway; isopentenyl diphosphate from 1-deoxy-D-xylulose 5-phosphate: step 3/6. Catalyzes the phosphorylation of the position 2 hydroxy group of 4-diphosphocytidyl-2C-methyl-D-erythritol. The polypeptide is 4-diphosphocytidyl-2-C-methyl-D-erythritol kinase (Verminephrobacter eiseniae (strain EF01-2)).